The sequence spans 501 residues: Lysine--tRNA ligase (501 aa).

Glu411 and Glu418 together coordinate Mg(2+).

The protein belongs to the class-II aminoacyl-tRNA synthetase family. As to quaternary structure, homodimer. Requires Mg(2+) as cofactor.

Its subcellular location is the cytoplasm. It catalyses the reaction tRNA(Lys) + L-lysine + ATP = L-lysyl-tRNA(Lys) + AMP + diphosphate. This chain is Lysine--tRNA ligase, found in Pseudomonas aeruginosa (strain ATCC 15692 / DSM 22644 / CIP 104116 / JCM 14847 / LMG 12228 / 1C / PRS 101 / PAO1).